Reading from the N-terminus, the 643-residue chain is 1-deoxy-D-xylulose-5-phosphate synthase (643 aa).

Thiamine diphosphate is bound by residues His-78 and 119–121 (AHS). Asp-150 provides a ligand contact to Mg(2+). Thiamine diphosphate contacts are provided by residues 151–152 (GS), Asn-179, Tyr-288, and Glu-370. Asn-179 provides a ligand contact to Mg(2+).

Belongs to the transketolase family. DXPS subfamily. Homodimer. Requires Mg(2+) as cofactor. Thiamine diphosphate is required as a cofactor.

The enzyme catalyses D-glyceraldehyde 3-phosphate + pyruvate + H(+) = 1-deoxy-D-xylulose 5-phosphate + CO2. Its pathway is metabolic intermediate biosynthesis; 1-deoxy-D-xylulose 5-phosphate biosynthesis; 1-deoxy-D-xylulose 5-phosphate from D-glyceraldehyde 3-phosphate and pyruvate: step 1/1. In terms of biological role, catalyzes the acyloin condensation reaction between C atoms 2 and 3 of pyruvate and glyceraldehyde 3-phosphate to yield 1-deoxy-D-xylulose-5-phosphate (DXP). In Brucella suis (strain ATCC 23445 / NCTC 10510), this protein is 1-deoxy-D-xylulose-5-phosphate synthase.